Here is a 555-residue protein sequence, read N- to C-terminus: Efflux pump FUS6 (555 aa).

The disordered stretch occupies residues 1-23 (MASAKDAQPAPEKSLSSDPQPEP). 5 consecutive transmembrane segments (helical) span residues 31 to 51 (WLIFVAISLTTFLAALDTSII), 67 to 87 (LYVWIIDAYLLASTATIPIFA), 97 to 117 (SLTLIAVCIFTLGSGLCGGAH), 130 to 150 (GIGGGGILTMSEIVVCDMVSI), and 159 to 179 (IIGGVWAIAAVVAPVMGGAFA). A glycan (N-linked (GlcNAc...) asparagine) is linked at Asn-181. A run of 3 helical transmembrane segments spans residues 186–206 (WIFYINLPIAGVSLVALGLFL), 225–245 (WGGSVLLIGSVTSIVLALSWG), and 253–273 (GWQTIVPLVIGLLALVAFFAY). A glycan (N-linked (GlcNAc...) asparagine) is linked at Asn-291. The next 6 helical transmembrane spans lie at 297–317 (LLVISFIHSLLLYWICYFLPV), 332–352 (VMLFPIACTSAPAGVAAGITI), 360–380 (VWHFTGFVLMSIACGLFTLLD), 393–413 (ILFGVGTGTVFTSTLPPILAS), 425–445 (AWTFIRNFGSIWGVAIPAAVF), and 501–521 (KVVWQVSLAFCLLGFILCFFV). Residue Asn-545 is glycosylated (N-linked (GlcNAc...) asparagine).

It belongs to the major facilitator superfamily. TCR/Tet family.

Its subcellular location is the membrane. Its function is as follows. Efflux pump; part of the gene cluster that mediates the biosynthesis of the mycotoxin fusarin C. Within the cluster, FUS1, FUS2, FUS8 and FUS9 are sufficient for fusarin production. The other FUS cluster members are not essential for fusarin C biosynthesis. The polypeptide is Efflux pump FUS6 (Gibberella fujikuroi (strain CBS 195.34 / IMI 58289 / NRRL A-6831) (Bakanae and foot rot disease fungus)).